The primary structure comprises 471 residues: Ribulose bisphosphate carboxylase large chain (471 aa).

Substrate contacts are provided by asparagine 115 and threonine 165. Catalysis depends on lysine 167, which acts as the Proton acceptor. A substrate-binding site is contributed by lysine 169. The Mg(2+) site is built by lysine 193, aspartate 195, and glutamate 196. Lysine 193 carries the N6-carboxylysine modification. Residue histidine 286 is the Proton acceptor of the active site. 3 residues coordinate substrate: arginine 287, histidine 319, and serine 371.

Belongs to the RuBisCO large chain family. Type I subfamily. Heterohexadecamer of 8 large chains and 8 small chains. Mg(2+) serves as cofactor.

The enzyme catalyses 2 (2R)-3-phosphoglycerate + 2 H(+) = D-ribulose 1,5-bisphosphate + CO2 + H2O. It catalyses the reaction D-ribulose 1,5-bisphosphate + O2 = 2-phosphoglycolate + (2R)-3-phosphoglycerate + 2 H(+). Functionally, ruBisCO catalyzes two reactions: the carboxylation of D-ribulose 1,5-bisphosphate, the primary event in carbon dioxide fixation, as well as the oxidative fragmentation of the pentose substrate. Both reactions occur simultaneously and in competition at the same active site. The protein is Ribulose bisphosphate carboxylase large chain of Alvinoconcha hessleri symbiotic bacterium.